Here is a 296-residue protein sequence, read N- to C-terminus: Ribosomal RNA small subunit methyltransferase A (296 aa).

A compositionally biased stretch (basic and acidic residues) spans 1–11 (MERSHVGRDCG). The disordered stretch occupies residues 1–24 (MERSHVGRDCGSRSSPRAFSVPTS). Polar residues predominate over residues 12–24 (SRSSPRAFSVPTS). Residues N43, L45, G70, E91, D113, and N135 each coordinate S-adenosyl-L-methionine.

It belongs to the class I-like SAM-binding methyltransferase superfamily. rRNA adenine N(6)-methyltransferase family. RsmA subfamily.

It localises to the cytoplasm. It carries out the reaction adenosine(1518)/adenosine(1519) in 16S rRNA + 4 S-adenosyl-L-methionine = N(6)-dimethyladenosine(1518)/N(6)-dimethyladenosine(1519) in 16S rRNA + 4 S-adenosyl-L-homocysteine + 4 H(+). Specifically dimethylates two adjacent adenosines (A1518 and A1519) in the loop of a conserved hairpin near the 3'-end of 16S rRNA in the 30S particle. May play a critical role in biogenesis of 30S subunits. This is Ribosomal RNA small subunit methyltransferase A from Salinibacter ruber (strain DSM 13855 / M31).